Here is a 283-residue protein sequence, read N- to C-terminus: Polyamine aminopropyltransferase (283 aa).

Residues 5–241 (NNWYIEHFER…GWWSVTMARK (237 aa)) enclose the PABS domain. Position 35 (glutamine 35) interacts with S-methyl-5'-thioadenosine. Spermidine contacts are provided by histidine 66 and aspartate 90. Residues aspartate 110 and 141–142 (DG) each bind S-methyl-5'-thioadenosine. Residue aspartate 160 is the Proton acceptor of the active site. Position 160-163 (160-163 (DSTD)) interacts with spermidine. Proline 167 is a binding site for S-methyl-5'-thioadenosine.

The protein belongs to the spermidine/spermine synthase family. As to quaternary structure, homodimer or homotetramer.

Its subcellular location is the cytoplasm. The enzyme catalyses S-adenosyl 3-(methylsulfanyl)propylamine + putrescine = S-methyl-5'-thioadenosine + spermidine + H(+). The protein operates within amine and polyamine biosynthesis; spermidine biosynthesis; spermidine from putrescine: step 1/1. Functionally, catalyzes the irreversible transfer of a propylamine group from the amino donor S-adenosylmethioninamine (decarboxy-AdoMet) to putrescine (1,4-diaminobutane) to yield spermidine. In Stenotrophomonas maltophilia (strain K279a), this protein is Polyamine aminopropyltransferase.